We begin with the raw amino-acid sequence, 68 residues long: Amphipathic peptide CT1 (68 aa).

The N-terminal stretch at 1 to 23 (MKTQIVILIVAVLFLQLVSQSDA) is a signal peptide. Leu-36 is modified (leucine amide). The propeptide occupies 40 to 68 (GLKNLDQYNDLFDGEISDADIKFLKDLMR).

Belongs to the non-disulfide-bridged peptide (NDBP) superfamily. Short antimicrobial peptide (group 4) family. Expressed by the venom gland.

It is found in the secreted. The protein resides in the target cell membrane. Functionally, amphipathic peptide that shows no antibacterial activity even at 50 uM but shows a low hemolytic activity against human erythrocytes. In Mesomexovis subcristatus (Scorpion), this protein is Amphipathic peptide CT1.